The sequence spans 655 residues: Probable replication factor A 73 kDa subunit (655 aa).

Residues 195-217 (NRAAAPEATRARAVPPPARRTAS) are disordered. Low complexity predominate over residues 196 to 207 (RAAAPEATRARA). Residues 236–326 (FKIHGMVSRK…TLRSDSIIEA (91 aa)) constitute a DNA-binding region (OB). The segment at 518–539 (CASEGCQKKLVGENGDYRCEKC) adopts a C4-type zinc-finger fold.

The protein belongs to the replication factor A protein 1 family. As to quaternary structure, component of the heterotrimeric canonical replication protein A complex (RPA).

The protein localises to the nucleus. In terms of biological role, as part of the heterotrimeric replication protein A complex (RPA/RP-A), binds and stabilizes single-stranded DNA intermediates, that form during DNA replication or upon DNA stress. It prevents their reannealing and in parallel, recruits and activates different proteins and complexes involved in DNA metabolism. Thereby, it plays an essential role both in DNA replication and the cellular response to DNA damage. This is Probable replication factor A 73 kDa subunit from Caenorhabditis elegans.